Reading from the N-terminus, the 333-residue chain is Phenylalanine--tRNA ligase alpha subunit (333 aa).

Mg(2+) is bound at residue E254.

This sequence belongs to the class-II aminoacyl-tRNA synthetase family. Phe-tRNA synthetase alpha subunit type 1 subfamily. As to quaternary structure, tetramer of two alpha and two beta subunits. It depends on Mg(2+) as a cofactor.

The protein resides in the cytoplasm. The enzyme catalyses tRNA(Phe) + L-phenylalanine + ATP = L-phenylalanyl-tRNA(Phe) + AMP + diphosphate + H(+). In Xylella fastidiosa (strain 9a5c), this protein is Phenylalanine--tRNA ligase alpha subunit (pheS).